Reading from the N-terminus, the 570-residue chain is E3 ubiquitin-protein ligase ZFP91 (570 aa).

Basic and acidic residues predominate over residues 1–12; sequence MPGETEEPRPPE. Positions 1–306 are disordered; that stretch reads MPGETEEPRP…PRLPKRRKKP (306 aa). Low complexity-rich tracts occupy residues 31–43 and 59–68; these read QRPP…APAG and AAAAAAAAAV. A compositionally biased stretch (basic residues) spans 69-82; the sequence is SRRRKAEYPRRRRS. Residues S83 and S103 each carry the phosphoserine modification. Residues 94-104 show a composition bias toward polar residues; the sequence is QQPQAAKSPSP. The segment covering 119-128 has biased composition (basic and acidic residues); the sequence is VTTDKDPKEE. The segment covering 207–223 has biased composition (acidic residues); it reads SEEEEEEEEEMLISEEE. 2 stretches are compositionally biased toward basic and acidic residues: residues 224–245 and 252–269; these read IPFK…ETPK and KVKE…VEVE. Positions 270-282 are enriched in acidic residues; that stretch reads VKEEENEIREDEE. 5 consecutive C2H2-type zinc fingers follow at residues 311–336, 342–366, 372–394, 400–422, and 430–453; these read VRCE…KYQH, YVCP…AKHH, YICE…RMIH, LQCE…MKKH, and FSCN…AKSH. The interaction with MAP3K14/NIK stretch occupies residues 338 to 368; sequence LKKKYVCPHPSCGRLFRLQKQLLRHAKHHTD.

It belongs to the krueppel C2H2-type zinc-finger protein family. Interacts with MAP3K14/NIK. As to expression, expressed ubiquitously, particularly at high level in testis. Isoform 2 is testis specific.

Its subcellular location is the nucleus. The enzyme catalyses S-ubiquitinyl-[E2 ubiquitin-conjugating enzyme]-L-cysteine + [acceptor protein]-L-lysine = [E2 ubiquitin-conjugating enzyme]-L-cysteine + N(6)-ubiquitinyl-[acceptor protein]-L-lysine.. It functions in the pathway protein modification; protein ubiquitination. In terms of biological role, atypical E3 ubiquitin-protein ligase that mediates 'Lys-63'-linked ubiquitination of MAP3K14/NIK, leading to stabilize and activate MAP3K14/NIK. It thereby acts as an activator of the non-canonical NF-kappa-B2/NFKB2 pathway. May also play an important role in cell proliferation and/or anti-apoptosis. The polypeptide is E3 ubiquitin-protein ligase ZFP91 (ZFP91) (Homo sapiens (Human)).